A 550-amino-acid chain; its full sequence is Hydroxylamine reductase (550 aa).

The [2Fe-2S] cluster site is built by cysteine 3, cysteine 6, cysteine 18, and cysteine 25. The hybrid [4Fe-2O-2S] cluster site is built by histidine 249, glutamate 273, cysteine 317, cysteine 405, cysteine 433, cysteine 458, glutamate 492, and lysine 494. Cysteine 405 is subject to Cysteine persulfide.

The protein belongs to the HCP family. [2Fe-2S] cluster is required as a cofactor. Requires hybrid [4Fe-2O-2S] cluster as cofactor.

The protein localises to the cytoplasm. The catalysed reaction is A + NH4(+) + H2O = hydroxylamine + AH2 + H(+). Functionally, catalyzes the reduction of hydroxylamine to form NH(3) and H(2)O. In Enterobacter sp. (strain 638), this protein is Hydroxylamine reductase.